A 291-amino-acid chain; its full sequence is Shikimate dehydrogenase (NADP(+)) (291 aa).

Residues 26 to 28 and S73 each bind shikimate; that span reads SLS. The active-site Proton acceptor is the K77. N98 and D113 together coordinate shikimate. NADP(+) is bound by residues 137-141 and V238; that span reads GAGGA. Y240 contributes to the shikimate binding site. NADP(+) is bound at residue G261.

Belongs to the shikimate dehydrogenase family. In terms of assembly, homodimer.

The catalysed reaction is shikimate + NADP(+) = 3-dehydroshikimate + NADPH + H(+). It functions in the pathway metabolic intermediate biosynthesis; chorismate biosynthesis; chorismate from D-erythrose 4-phosphate and phosphoenolpyruvate: step 4/7. Its function is as follows. Involved in the biosynthesis of the chorismate, which leads to the biosynthesis of aromatic amino acids. Catalyzes the reversible NADPH linked reduction of 3-dehydroshikimate (DHSA) to yield shikimate (SA). The sequence is that of Shikimate dehydrogenase (NADP(+)) from Listeria monocytogenes serotype 4b (strain F2365).